The primary structure comprises 239 residues: Carboxy-S-adenosyl-L-methionine synthase (239 aa).

Residues tyrosine 35, 64 to 66, 88 to 89, and arginine 195 contribute to the S-adenosyl-L-methionine site; these read GCS and DN.

It belongs to the class I-like SAM-binding methyltransferase superfamily. Cx-SAM synthase family. In terms of assembly, homodimer.

The enzyme catalyses prephenate + S-adenosyl-L-methionine = carboxy-S-adenosyl-L-methionine + 3-phenylpyruvate + H2O. Its function is as follows. Catalyzes the conversion of S-adenosyl-L-methionine (SAM) to carboxy-S-adenosyl-L-methionine (Cx-SAM). The protein is Carboxy-S-adenosyl-L-methionine synthase of Helicobacter pylori (strain G27).